A 249-amino-acid chain; its full sequence is Triosephosphate isomerase (249 aa).

9 to 11 serves as a coordination point for substrate; the sequence is NWK. The active-site Electrophile is histidine 95. Glutamate 165 (proton acceptor) is an active-site residue. Substrate-binding positions include glycine 171, serine 211, and 232–233; that span reads GG.

Belongs to the triosephosphate isomerase family. As to quaternary structure, homodimer.

The protein localises to the cytoplasm. The enzyme catalyses D-glyceraldehyde 3-phosphate = dihydroxyacetone phosphate. Its pathway is carbohydrate biosynthesis; gluconeogenesis. The protein operates within carbohydrate degradation; glycolysis; D-glyceraldehyde 3-phosphate from glycerone phosphate: step 1/1. Involved in the gluconeogenesis. Catalyzes stereospecifically the conversion of dihydroxyacetone phosphate (DHAP) to D-glyceraldehyde-3-phosphate (G3P). The protein is Triosephosphate isomerase of Chlorobium phaeobacteroides (strain DSM 266 / SMG 266 / 2430).